We begin with the raw amino-acid sequence, 242 residues long: DNA repair protein RecO (242 aa).

This sequence belongs to the RecO family. Monomer.

Its function is as follows. Involved in DNA repair and RecF pathway recombination. The protein is DNA repair protein RecO of Salmonella dublin (strain CT_02021853).